Reading from the N-terminus, the 46-residue chain is uncharacterized protein (46 aa).

Residues 20–42 (MAMIWVVAALVIALVVGTALNYI) traverse the membrane as a helical segment.

The protein resides in the membrane. This is an uncharacterized protein from Bacillus subtilis (strain 168).